A 362-amino-acid polypeptide reads, in one-letter code: Shewanella-like protein phosphatase 1 (362 aa).

Residues 1-23 (MIFKKALYILLFLYIAIVKKGES) form the signal peptide. Mn(2+) is bound by residues Asp-65, His-67, Asp-101, and Asn-136. His-137 (proton donor) is an active-site residue. His-196 contacts Mn(2+).

It belongs to the metallophosphoesterase superfamily. SLP family. Requires Mn(2+) as cofactor.

In terms of biological role, phosphatase which plays an essential role in the development and differentiation of the ookinete and in the formation of ookinete micronemes. This is Shewanella-like protein phosphatase 1 from Plasmodium berghei (strain Anka).